The sequence spans 376 residues: Putative transmembrane protein 183BP (376 aa).

Disordered regions lie at residues 1–20 (MARGPGPLGRPRPDTVAMPK) and 102–127 (AQEENIHERTVSRKKKSKRHKEELDG). Residues 300-320 (LNFIFIPIVMGMIFTLFTINV) form a helical membrane-spanning segment.

This sequence belongs to the TMEM183 family. As to expression, expressed in brain, lung, pancreas, thymus, intestine and blood. Not detected in heart, placenta, liver, muscle, kidney, spleen, prostate, testis, ovary and colon.

Its subcellular location is the membrane. The chain is Putative transmembrane protein 183BP from Homo sapiens (Human).